A 101-amino-acid chain; its full sequence is Urease subunit beta (101 aa).

The protein belongs to the urease beta subunit family. Heterotrimer of UreA (gamma), UreB (beta) and UreC (alpha) subunits. Three heterotrimers associate to form the active enzyme.

It is found in the cytoplasm. It catalyses the reaction urea + 2 H2O + H(+) = hydrogencarbonate + 2 NH4(+). The protein operates within nitrogen metabolism; urea degradation; CO(2) and NH(3) from urea (urease route): step 1/1. This is Urease subunit beta from Pseudomonas fluorescens (strain ATCC BAA-477 / NRRL B-23932 / Pf-5).